The sequence spans 478 residues: RNA-binding protein 42 (478 aa).

The segment covering 1 to 20 (MASAMAGAGPAPGLPVAGGP) has biased composition (low complexity). The disordered stretch occupies residues 1–33 (MASAMAGAGPAPGLPVAGGPVVPGPGVGIPGKS). A2 bears the N-acetylalanine mark. S133 carries the phosphoserine modification. An asymmetric dimethylarginine mark is found at R151, R156, R166, and R179. 2 disordered regions span residues 171-209 (LSSA…PPMA) and 317-354 (SLRP…PEKL). Positions 193-205 (PPLPGPPGPPMML) are enriched in pro residues. Residues 234-478 (DLGLGLGLGL…QKEKKKLGLR (245 aa)) are necessary for interaction with HNRNPK. Basic and acidic residues predominate over residues 343–354 (GEDKKKGKPEKL). Positions 379–457 (FRIFCGDLGN…RPIKLRKSMW (79 aa)) constitute an RRM domain.

It belongs to the RRM RBM42 family. As to quaternary structure, interacts with HNRNPK.

The protein localises to the nucleus. The protein resides in the cytoplasm. Functionally, binds (via the RRM domain) to the 3' untranslated region (UTR) of p21 mRNA. This is RNA-binding protein 42 (Rbm42) from Rattus norvegicus (Rat).